A 457-amino-acid chain; its full sequence is Carboxypeptidase N catalytic chain (457 aa).

The first 23 residues, 1-23 (MPDLPSAFLPLLLLSKFVTPVTF), serve as a signal peptide directing secretion. The Peptidase M14 domain maps to 24–338 (RHHRYDDLVR…EALIQFLEQV (315 aa)). C42 and C104 are disulfide-bonded. Zn(2+)-binding residues include H86, E89, and H216. C271 and C311 form a disulfide bridge. The Proton donor/acceptor role is filled by E308. 3 O-linked (GalNAc...) threonine glycosylation sites follow: T400, T402, and T409. Residues 418–457 (SSSQVYPVQRAPGRGQGGRAKQPRTSRKKDPATKRHRGPA) form a disordered region.

It belongs to the peptidase M14 family. As to quaternary structure, tetramer of two catalytic chains and two glycosylated inactive chains. Zn(2+) is required as a cofactor. Mainly expressed in liver. Also detected in lung, stomach, intestine, spleen and kidney.

Its subcellular location is the secreted. The protein localises to the extracellular space. The enzyme catalyses Release of a C-terminal basic amino acid, preferentially lysine.. Its function is as follows. Protects the body from potent vasoactive and inflammatory peptides containing C-terminal Arg or Lys (such as kinins or anaphylatoxins) which are released into the circulation. The protein is Carboxypeptidase N catalytic chain (Cpn1) of Mus musculus (Mouse).